A 338-amino-acid chain; its full sequence is tRNA N6-adenosine threonylcarbamoyltransferase (338 aa).

Positions 111 and 115 each coordinate Fe cation. Substrate is bound by residues 134-138 (LVSGG), Asp-167, Gly-180, and Asn-272. Asp-300 contacts Fe cation.

It belongs to the KAE1 / TsaD family. The cofactor is Fe(2+).

It is found in the cytoplasm. The enzyme catalyses L-threonylcarbamoyladenylate + adenosine(37) in tRNA = N(6)-L-threonylcarbamoyladenosine(37) in tRNA + AMP + H(+). In terms of biological role, required for the formation of a threonylcarbamoyl group on adenosine at position 37 (t(6)A37) in tRNAs that read codons beginning with adenine. Is involved in the transfer of the threonylcarbamoyl moiety of threonylcarbamoyl-AMP (TC-AMP) to the N6 group of A37, together with TsaE and TsaB. TsaD likely plays a direct catalytic role in this reaction. This Shewanella putrefaciens (strain CN-32 / ATCC BAA-453) protein is tRNA N6-adenosine threonylcarbamoyltransferase.